We begin with the raw amino-acid sequence, 248 residues long: Probable transcriptional regulatory protein FTM_1203 (248 aa).

The protein belongs to the TACO1 family.

It localises to the cytoplasm. The chain is Probable transcriptional regulatory protein FTM_1203 from Francisella tularensis subsp. mediasiatica (strain FSC147).